Reading from the N-terminus, the 217-residue chain is Biotin transport regulator (217 aa).

Residues 14-49 (GDGLGNLAGRSADPTGAADKGESGVPVPPTGFVDPT) are disordered.

May be part of a system that R.meliloti uses to respond to plant (alfalfa) biotin signals. This is Biotin transport regulator (bioS) from Rhizobium meliloti (strain 1021) (Ensifer meliloti).